The sequence spans 429 residues: Cell cycle protein kinase spo4 (429 aa).

A Protein kinase domain is found at 40–402 (YHVVKLVGAG…KAKTALQHEF (363 aa)). Residues 46-54 (VGAGSFSSV) and K95 each bind ATP. D182 serves as the catalytic Proton acceptor. A Phosphothreonine modification is found at T264.

This sequence belongs to the protein kinase superfamily. Ser/Thr protein kinase family. CDC7 subfamily. Interacts with spo6.

Its subcellular location is the nucleus. The catalysed reaction is L-seryl-[protein] + ATP = O-phospho-L-seryl-[protein] + ADP + H(+). The enzyme catalyses L-threonyl-[protein] + ATP = O-phospho-L-threonyl-[protein] + ADP + H(+). In terms of biological role, required for the initiation of meiosis II and progression through anaphase II. The chain is Cell cycle protein kinase spo4 (spo4) from Schizosaccharomyces pombe (strain 972 / ATCC 24843) (Fission yeast).